The primary structure comprises 174 residues: Adenylate kinase (174 aa).

Positions Ser-12–Val-41 are NMP. Residues Thr-13, Arg-18, Gly-39–Val-41, Gly-67–Arg-70, and Gln-74 contribute to the AMP site. Residues Gly-104–Asp-141 are LID. ATP contacts are provided by residues Arg-105 and Thr-114 to Tyr-115. 2 residues coordinate AMP: Arg-138 and Arg-149.

This sequence belongs to the adenylate kinase family. Monomer.

It localises to the cytoplasm. It catalyses the reaction AMP + ATP = 2 ADP. It participates in purine metabolism; AMP biosynthesis via salvage pathway; AMP from ADP: step 1/1. Functionally, catalyzes the reversible transfer of the terminal phosphate group between ATP and AMP. Plays an important role in cellular energy homeostasis and in adenine nucleotide metabolism. The sequence is that of Adenylate kinase from Neisseria cinerea.